A 1953-amino-acid polypeptide reads, in one-letter code: TATA-binding protein-associated factor mot1 (1953 aa).

An HEAT 1 repeat occupies 36-74; it reads PDELYNLLGRVVPYLKSKNWDTRVAAAKAIGGIVENVPV. A disordered region spans residues 79–141; that stretch reads RTSPVKKEET…KLEEERLSTR (63 aa). A compositionally biased stretch (basic and acidic residues) spans 98–108; it reads TEEKPFIKTEE. Over residues 113 to 130 the composition is skewed to low complexity; it reads SSQSQVVVSSNLTSNSEV. The span at 131-141 shows a compositional bias: basic and acidic residues; it reads SKLEEERLSTR. Ser144 carries the phosphoserine modification. The interval 240-278 is disordered; that stretch reads DNVGSNSKGSPTTSIPEHKTSINNNKPEDTPTPSENVHL. Polar residues predominate over residues 242–276; sequence VGSNSKGSPTTSIPEHKTSINNNKPEDTPTPSENV. HEAT repeat units follow at residues 358–396, 513–551, 554–592, and 608–646; these read VWPF…YAGF, SDYL…KLVQ, LSSC…LCSF, and EFSF…VQTS. Disordered stretches follow at residues 730-762 and 1078-1103; these read SGQP…KDDP and DDND…KSSL. HEAT repeat units lie at residues 1191-1229 and 1270-1311; these read QSEI…SNAA and VRIL…LVPL. The Helicase ATP-binding domain maps to 1370 to 1543; it reads AFLNKYELHG…WSLFDFLMPG (174 aa). 1383–1390 provides a ligand contact to ATP; sequence DDMGLGKT. The DEGH box motif lies at 1494-1497; the sequence is DEGH. Residues 1580 to 1623 form an HEAT 8 repeat; that stretch reads EAIHKQVLPFMLRRLKEDVLADLPPKIIQDYYCDMSDLQRKLLN. Residues 1725-1877 enclose the Helicase C-terminal domain; that stretch reads GIDSALTNAV…STVVNQQNAG (153 aa). A disordered region spans residues 1901 to 1920; the sequence is QNIDKEESEDAAGRGLSGTS.

This sequence belongs to the SNF2/RAD54 helicase family. As to quaternary structure, forms a complex with TBP which binds TATA DNA.

It localises to the nucleus. In terms of biological role, regulates transcription in association with TATA binding protein (TBP). Removes TBP from the TATA box via its ATPase activity. The chain is TATA-binding protein-associated factor mot1 from Schizosaccharomyces pombe (strain 972 / ATCC 24843) (Fission yeast).